A 454-amino-acid chain; its full sequence is tRNA modification GTPase MnmE (454 aa).

Arg-23, Glu-80, and Lys-120 together coordinate (6S)-5-formyl-5,6,7,8-tetrahydrofolate. The region spanning 216-377 (GMKVVIAGRP…LRNHLKQSMG (162 aa)) is the TrmE-type G domain. Asn-226 contacts K(+). GTP-binding positions include 226-231 (NAGKSS), 245-251 (TDIAGTT), 270-273 (DTAG), 335-338 (NKAD), and 358-360 (SAR). Mg(2+) is bound at residue Ser-230. Positions 245, 247, and 250 each coordinate K(+). Residue Thr-251 coordinates Mg(2+). Lys-454 serves as a coordination point for (6S)-5-formyl-5,6,7,8-tetrahydrofolate.

Belongs to the TRAFAC class TrmE-Era-EngA-EngB-Septin-like GTPase superfamily. TrmE GTPase family. Homodimer. Heterotetramer of two MnmE and two MnmG subunits. The cofactor is K(+).

The protein localises to the cytoplasm. Functionally, exhibits a very high intrinsic GTPase hydrolysis rate. Involved in the addition of a carboxymethylaminomethyl (cmnm) group at the wobble position (U34) of certain tRNAs, forming tRNA-cmnm(5)s(2)U34. The chain is tRNA modification GTPase MnmE from Salmonella paratyphi C (strain RKS4594).